We begin with the raw amino-acid sequence, 389 residues long: Sulfate adenylyltransferase (389 aa).

This sequence belongs to the sulfate adenylyltransferase family.

It catalyses the reaction sulfate + ATP + H(+) = adenosine 5'-phosphosulfate + diphosphate. It participates in sulfur metabolism; hydrogen sulfide biosynthesis; sulfite from sulfate: step 1/3. This Desulforamulus reducens (strain ATCC BAA-1160 / DSM 100696 / MI-1) (Desulfotomaculum reducens) protein is Sulfate adenylyltransferase.